Reading from the N-terminus, the 195-residue chain is Calcium channel flower (195 aa).

Transmembrane regions (helical) follow at residues 34-54, 66-88, and 117-137; these read LLGI…VISI, IIQM…VCIE, and IFMC…ATGV.

Belongs to the calcium channel flower family. As to quaternary structure, homomultimer. Associates with the dally/ magu complex.

The protein resides in the cell membrane. The protein localises to the cytoplasmic vesicle. It is found in the secretory vesicle. Its subcellular location is the synaptic vesicle membrane. It localises to the presynaptic cell membrane. The protein resides in the endosome. With respect to regulation, channel activity is inhibited by La(3+), which reduces Ca(2+) influx and thus inhibits it's function in promoting activity-dependent bulk endocytosis (ADBE) in response to high stimuli. Transmembrane protein which mediates synaptic endocytosis, fitness-based cell culling, neuronal culling, morphogen gradient scaling, and calcium transport. Regulates synaptic endocytosis and hence couples exo- with endocytosis. Controls two major modes of synaptic vesicle (SV) endocytosis in the synaptic boutons of neuromuscular junctions (NMJs); Ca(2+) channel-independent Clathrin-mediated endocytosis (CME) in response to mild stimulation, and Ca(2+) channel-dependent activity-dependent bulk endocytosis (ADBE) in response to strong stimulation. Functions in ADBE and subsequent SV reformation from bulk endosomes by initiating Ca(2+) channel-dependent phosphatidylinositol 4,5-bisphosphate (PtdIns(4,5)P2) compartmentalization in synaptic boutons. There it acts at the periactive zone to provide the low Ca(2+) levels required to initiate Calcineurin activation and upregulate PtdIns(4,5)P2. Conversely PtdIns(4,5)P2 enhances fwe Ca(2+) channel-activity, establishing a positive feedback loop that induces PtdIns(4,5)P2 microdomain at the periactive zone. These microdomains trigger bulk membrane invagination (i.e. ADBE) by triggering actin polymerization while also promoting localization of fwe to bulk endosomes, thereby removing the ADBE trigger to reduce endocytosis and prevent excess membrane uptake. PtdIns(4,5)P2 then promotes SV reformation from the bulk endosomes, to coordinate ADBE and subsequent SV reformation. Different combinations of the flower isoforms at the cell membrane are also required for the identification and elimination of suboptimal or supernumerary cells during development, regeneration, and adulthood. Required for the recognition and elimination of unfit cells in the developing wing during cell competition. In the developing pupal retina, mediates the elimination of unwanted postmitotic neurons, including supernumerary photoreceptor neurons that form at the periphery of the retina and are contained within incomplete ommatidia units. Also required for efficient elimination and replacement of old neurons by newly generated neurons during regeneration in the adult brain following mechanical injury. Downstream of the flower fitness fingerprints, cells identified as unwanted or unfit are eliminated via apoptosis through the expression of ahuizotl (azot). However, the cells marked for elimination by the flower isoforms only undergo apoptosis if additional thresholds are met; (1) their neighboring fit/healthy cells express different levels of the fwe isoforms, and (2) the levels of the protective signal SPARC expressed by the loser or unwanted cells are unable to inhibit caspase activation. These additional thresholds for flower-mediated apoptosis, allows useful cells to recover from transient and limited stress before they are unnecessarily eliminated. Functions with dally and magu in a mechanism of scaling, which utilises apoptosis to ensure that the dpp morphogen gradient, which mediates organ growth, remains proportional to the size of the growing wing. In this mechanism, fwe represses dally- and Magu-dependent activity in expanding the gradient, and dally/Magu inhibits fwe-dependent apoptosis to keep cell death rate low. When the levels of these different proteins are optimally regulated the gradient correctly scales with organ growth but when this fails, fwe-mediated apoptosis is activated to trim the developing tissue to match the correct size of the gradient. The polypeptide is Calcium channel flower (Drosophila ananassae (Fruit fly)).